We begin with the raw amino-acid sequence, 287 residues long: tRNA selenocysteine 1-associated protein 1 (287 aa).

RRM domains are found at residues 3 to 86 (ASLW…YATY) and 96 to 175 (YSLF…VAIP).

Belongs to the RRM TRSPAP family. As to quaternary structure, component of the tRNA(Sec) complex composed at least of EEFSEC, SECISBP2, SEPHS1, SEPSECS, TRNAU1AP and tRNA(Sec). Found in a complex with tRNA(Sec). Interacts with SEPSECS. Associates with mRNP and/or polysomes. Found in a complex with EEFSEC, SECISBP2, TRNAU1AP and tRNA(Sec).

The protein localises to the nucleus. The protein resides in the cytoplasm. Its function is as follows. Involved in the early steps of selenocysteine biosynthesis and tRNA(Sec) charging to the later steps resulting in the cotranslational incorporation of selenocysteine into selenoproteins. Stabilizes the SECISBP2, EEFSEC and tRNA(Sec) complex. May be involved in the methylation of tRNA(Sec). Enhances efficiency of selenoproteins synthesis. The chain is tRNA selenocysteine 1-associated protein 1 (TRNAU1AP) from Bos taurus (Bovine).